A 503-amino-acid polypeptide reads, in one-letter code: Cytochrome P450 monooxygenase roqO (503 aa).

The helical transmembrane segment at 11–31 (YSGTACAISLFIFGITLLFPF) threads the bilayer. N-linked (GlcNAc...) asparagine glycosylation occurs at asparagine 205. Cysteine 444 is a binding site for heme.

The protein belongs to the cytochrome P450 family. Heme is required as a cofactor.

The protein resides in the membrane. Its pathway is alkaloid biosynthesis. Functionally, cytochrome P450 monooxygenase; part of the gene cluster that mediates the biosynthesis of the mycotoxin meleagrin. The first stage is catalyzed by the dipeptide synthase roqA which condenses histidine and tryptophan to produce histidyltryptophanyldiketopiperazine (HTD). HTD is then converted to roquefortine C through two possible pathways. In the first pathway, prenyltransferase roqD transforms HTD to the intermediate roquefortine D, which is in turn converted to roquefortine C by the cytochrome P450 monooxygenase roqR. In the second pathway, HTD is first converted to the intermediate dehydrohistidyltryptophanyldi-ketopiperazine (DHTD) by roqR which is then prenylated by roqD to form roquefortine C. Roquefortine C can be further transformed to meleagrin via three more reactions including oxydation to glandicolin A by roqM, which is further reduced to glandicoline B by roqO. Finally, glandicoline B is converted to meleagrin by the glandicoline B O-methyltransferase roqN. More studies identified further branching and additional metabolites produced by the roquefortine/meleagrin cluster, including roquefortine F, roquefortine L, roquefortine M, roquefortine N and neoxaline. The protein is Cytochrome P450 monooxygenase roqO of Penicillium rubens (strain ATCC 28089 / DSM 1075 / NRRL 1951 / Wisconsin 54-1255) (Penicillium chrysogenum).